A 117-amino-acid polypeptide reads, in one-letter code: Protein SMALL AUXIN UP-REGULATED RNA 54 (117 aa).

It belongs to the ARG7 family. Expressed in trichomes. Hardly observed in leaves.

It localises to the cell membrane. In terms of biological role, provide a mechanistic link between auxin and plasma membrane H(+)-ATPases (PM H(+)-ATPases, e.g. AHA1 and AHA2), and triggers PM H(+)-ATPases activity by promoting phosphorylation of their C-terminal autoinhibitory domain as a result of PP2C-D subfamily of type 2C phosphatases inhibition, thus leading to the acidification of the apoplast and the facilitation of solutes and water uptake to drive cell expansion. Triggers plant growth probably by promoting cell elongation. Regulates branch angles and bending. This Arabidopsis thaliana (Mouse-ear cress) protein is Protein SMALL AUXIN UP-REGULATED RNA 54.